A 178-amino-acid polypeptide reads, in one-letter code: Nucleoside-triphosphatase THEP1 (178 aa).

ATP-binding positions include 9–16 (GPVGSIKA) and 101–108 (VIIIDEVG).

This sequence belongs to the THEP1 NTPase family.

The catalysed reaction is a ribonucleoside 5'-triphosphate + H2O = a ribonucleoside 5'-diphosphate + phosphate + H(+). Functionally, has nucleotide phosphatase activity towards ATP, GTP, CTP, TTP and UTP. May hydrolyze nucleoside diphosphates with lower efficiency. This chain is Nucleoside-triphosphatase THEP1, found in Thermoplasma volcanium (strain ATCC 51530 / DSM 4299 / JCM 9571 / NBRC 15438 / GSS1).